The chain runs to 496 residues: Chromosomal replication initiator protein DnaA (496 aa).

The tract at residues Met1–Gln76 is domain I, interacts with DnaA modulators. Positions Gln76–Ser150 are domain II. Residues Pro151–Gln373 form a domain III, AAA+ region region. Residues Gly197, Gly199, Lys200, and Thr201 each contribute to the ATP site. Positions Ser374–Ala496 are domain IV, binds dsDNA.

It belongs to the DnaA family. As to quaternary structure, oligomerizes as a right-handed, spiral filament on DNA at oriC.

Its subcellular location is the cytoplasm. In terms of biological role, plays an essential role in the initiation and regulation of chromosomal replication. ATP-DnaA binds to the origin of replication (oriC) to initiate formation of the DNA replication initiation complex once per cell cycle. Binds the DnaA box (a 9 base pair repeat at the origin) and separates the double-stranded (ds)DNA. Forms a right-handed helical filament on oriC DNA; dsDNA binds to the exterior of the filament while single-stranded (ss)DNA is stabiized in the filament's interior. The ATP-DnaA-oriC complex binds and stabilizes one strand of the AT-rich DNA unwinding element (DUE), permitting loading of DNA polymerase. After initiation quickly degrades to an ADP-DnaA complex that is not apt for DNA replication. Binds acidic phospholipids. In Brucella suis biovar 1 (strain 1330), this protein is Chromosomal replication initiator protein DnaA.